The primary structure comprises 183 residues: Peptide deformylase (183 aa).

Fe cation is bound by residues Cys111 and His154. Glu155 is a catalytic residue. Position 158 (His158) interacts with Fe cation.

The protein belongs to the polypeptide deformylase family. It depends on Fe(2+) as a cofactor.

It carries out the reaction N-terminal N-formyl-L-methionyl-[peptide] + H2O = N-terminal L-methionyl-[peptide] + formate. Removes the formyl group from the N-terminal Met of newly synthesized proteins. Requires at least a dipeptide for an efficient rate of reaction. N-terminal L-methionine is a prerequisite for activity but the enzyme has broad specificity at other positions. The chain is Peptide deformylase from Staphylococcus aureus (strain COL).